A 348-amino-acid polypeptide reads, in one-letter code: Ion-translocating oxidoreductase complex subunit D (348 aa).

Helical transmembrane passes span 15-35 (LTAKFMLWVMVAMLPALGMQA), 36-56 (YFFGYGVFIQVFIALLLAVAI), 67-87 (PTAFYVADLSGVLTALILAIS), 88-108 (IPPYAPYWIIVIGIIVALLLA), and 125-145 (VAYALLLVSFPVQMTGWLVPI). An FMN phosphoryl threonine modification is found at T186. The next 5 membrane-spanning stretches (helical) occupy residues 212 to 232 (LFANGWWQINLAFLAGGLLLI), 241 to 261 (IPAAMLGMFALLSGLTDLLLP), 265 to 285 (LNVVSQLFSGAMMFGAFFIAT), 298 to 318 (LIFGGLIGLFVYLIRYYGNYP), and 320 to 340 (AVAFSVLLANICVPLIDHYTQ).

It belongs to the NqrB/RnfD family. In terms of assembly, the complex is composed of six subunits: RnfA, RnfB, RnfC, RnfD, RnfE and RnfG. FMN is required as a cofactor.

The protein resides in the cell inner membrane. Its function is as follows. Part of a membrane-bound complex that couples electron transfer with translocation of ions across the membrane. The protein is Ion-translocating oxidoreductase complex subunit D of Actinobacillus pleuropneumoniae serotype 5b (strain L20).